We begin with the raw amino-acid sequence, 297 residues long: Nucleotide-binding protein BTH_I0482 (297 aa).

8 to 15 (GISGSGKS) contacts ATP. 57 to 60 (DARS) contributes to the GTP binding site.

The protein belongs to the RapZ-like family.

Its function is as follows. Displays ATPase and GTPase activities. In Burkholderia thailandensis (strain ATCC 700388 / DSM 13276 / CCUG 48851 / CIP 106301 / E264), this protein is Nucleotide-binding protein BTH_I0482.